A 524-amino-acid polypeptide reads, in one-letter code: Putative ribose/galactose/methyl galactoside import ATP-binding protein 1 (524 aa).

2 consecutive ABC transporter domains span residues 35–271 and 281–520; these read LEVR…VGRE and VPIG…RIMD. 67–74 is an ATP binding site; sequence GENGAGKS.

It belongs to the ABC transporter superfamily. Carbohydrate importer 2 (CUT2) (TC 3.A.1.2) family.

The protein localises to the cell inner membrane. The enzyme catalyses D-ribose(out) + ATP + H2O = D-ribose(in) + ADP + phosphate + H(+). It catalyses the reaction D-galactose(out) + ATP + H2O = D-galactose(in) + ADP + phosphate + H(+). Its function is as follows. Part of an ABC transporter complex involved in carbohydrate import. Could be involved in ribose, galactose and/or methyl galactoside import. Responsible for energy coupling to the transport system. This Burkholderia cenocepacia (strain HI2424) protein is Putative ribose/galactose/methyl galactoside import ATP-binding protein 1.